A 123-amino-acid polypeptide reads, in one-letter code: Small ribosomal subunit protein uS12 (123 aa).

Residue D89 is modified to 3-methylthioaspartic acid. Positions 104 to 123 are disordered; it reads TAGVKDRKQARSKYGAKRPK. Positions 113–123 are enriched in basic residues; the sequence is ARSKYGAKRPK.

It belongs to the universal ribosomal protein uS12 family. As to quaternary structure, part of the 30S ribosomal subunit. Contacts proteins S8 and S17. May interact with IF1 in the 30S initiation complex.

Functionally, with S4 and S5 plays an important role in translational accuracy. Its function is as follows. Interacts with and stabilizes bases of the 16S rRNA that are involved in tRNA selection in the A site and with the mRNA backbone. Located at the interface of the 30S and 50S subunits, it traverses the body of the 30S subunit contacting proteins on the other side and probably holding the rRNA structure together. The combined cluster of proteins S8, S12 and S17 appears to hold together the shoulder and platform of the 30S subunit. In Neisseria meningitidis serogroup C (strain 053442), this protein is Small ribosomal subunit protein uS12.